Here is a 267-residue protein sequence, read N- to C-terminus: 4-hydroxy-tetrahydrodipicolinate reductase (267 aa).

NAD(+) contacts are provided by residues 8–13 (GAAGRM) and glutamate 34. An NADP(+)-binding site is contributed by arginine 35. NAD(+) is bound by residues 98–100 (GST) and 122–125 (APNM). Histidine 155 (proton donor/acceptor) is an active-site residue. Histidine 156 provides a ligand contact to (S)-2,3,4,5-tetrahydrodipicolinate. The Proton donor role is filled by lysine 159. A (S)-2,3,4,5-tetrahydrodipicolinate-binding site is contributed by 165–166 (GT).

It belongs to the DapB family.

Its subcellular location is the cytoplasm. The enzyme catalyses (S)-2,3,4,5-tetrahydrodipicolinate + NAD(+) + H2O = (2S,4S)-4-hydroxy-2,3,4,5-tetrahydrodipicolinate + NADH + H(+). It carries out the reaction (S)-2,3,4,5-tetrahydrodipicolinate + NADP(+) + H2O = (2S,4S)-4-hydroxy-2,3,4,5-tetrahydrodipicolinate + NADPH + H(+). It functions in the pathway amino-acid biosynthesis; L-lysine biosynthesis via DAP pathway; (S)-tetrahydrodipicolinate from L-aspartate: step 4/4. In terms of biological role, catalyzes the conversion of 4-hydroxy-tetrahydrodipicolinate (HTPA) to tetrahydrodipicolinate. In Geobacter sp. (strain M21), this protein is 4-hydroxy-tetrahydrodipicolinate reductase.